The chain runs to 116 residues: Large ribosomal subunit protein uL18 (116 aa).

Belongs to the universal ribosomal protein uL18 family. Part of the 50S ribosomal subunit; part of the 5S rRNA/L5/L18/L25 subcomplex. Contacts the 5S and 23S rRNAs.

In terms of biological role, this is one of the proteins that bind and probably mediate the attachment of the 5S RNA into the large ribosomal subunit, where it forms part of the central protuberance. The protein is Large ribosomal subunit protein uL18 of Pseudomonas putida (strain GB-1).